The chain runs to 68 residues: UPF0434 protein BURPS668_0926 (68 aa).

It belongs to the UPF0434 family.

The polypeptide is UPF0434 protein BURPS668_0926 (Burkholderia pseudomallei (strain 668)).